Reading from the N-terminus, the 201-residue chain is Recombination protein RecR (201 aa).

The segment at 57–72 adopts a C4-type zinc-finger fold; that stretch reads CADCRTFTEQEKCNIC. Residues 81 to 176 enclose the Toprim domain; sequence GQICVVESPA…DASRIAHGVP (96 aa).

Belongs to the RecR family.

Its function is as follows. May play a role in DNA repair. It seems to be involved in an RecBC-independent recombinational process of DNA repair. It may act with RecF and RecO. The chain is Recombination protein RecR from Cronobacter sakazakii (strain ATCC BAA-894) (Enterobacter sakazakii).